We begin with the raw amino-acid sequence, 1054 residues long: Acid trehalase (1054 aa).

The N-terminal stretch at 1–21 (MRFKSVFTLLPLLAQLPSGGA) is a signal peptide. Residues Asn47, Asn135, Asn176, Asn283, and Asn307 are each glycosylated (N-linked (GlcNAc...) asparagine). 448–449 (WD) provides a ligand contact to substrate. N-linked (GlcNAc...) asparagine glycans are attached at residues Asn493, Asn513, Asn570, and Asn578. Catalysis depends on Glu584, which acts as the Proton donor. N-linked (GlcNAc...) asparagine glycosylation is found at Asn618 and Asn644. 650–651 (KQ) is a substrate binding site. N-linked (GlcNAc...) asparagine glycosylation is found at Asn665, Asn734, Asn803, Asn826, Asn838, Asn903, Asn937, Asn966, and Asn992.

The protein belongs to the glycosyl hydrolase 65 family.

The enzyme catalyses alpha,alpha-trehalose + H2O = alpha-D-glucose + beta-D-glucose. This chain is Acid trehalase (treA), found in Emericella nidulans (strain FGSC A4 / ATCC 38163 / CBS 112.46 / NRRL 194 / M139) (Aspergillus nidulans).